A 718-amino-acid chain; its full sequence is DNA ligase (718 aa).

NAD(+)-binding positions include 34–38, 83–84, and glutamate 115; these read DAEYD and SL. Lysine 117 acts as the N6-AMP-lysine intermediate in catalysis. Residues arginine 138, glutamate 186, lysine 302, and lysine 326 each coordinate NAD(+). The Zn(2+) site is built by cysteine 420, cysteine 423, cysteine 438, and cysteine 444. The BRCT domain maps to 604 to 694; the sequence is PKGDALAGKT…DRSAPAASNN (91 aa).

This sequence belongs to the NAD-dependent DNA ligase family. LigA subfamily. Mg(2+) is required as a cofactor. The cofactor is Mn(2+).

It catalyses the reaction NAD(+) + (deoxyribonucleotide)n-3'-hydroxyl + 5'-phospho-(deoxyribonucleotide)m = (deoxyribonucleotide)n+m + AMP + beta-nicotinamide D-nucleotide.. Functionally, DNA ligase that catalyzes the formation of phosphodiester linkages between 5'-phosphoryl and 3'-hydroxyl groups in double-stranded DNA using NAD as a coenzyme and as the energy source for the reaction. It is essential for DNA replication and repair of damaged DNA. This Roseiflexus castenholzii (strain DSM 13941 / HLO8) protein is DNA ligase.